The chain runs to 546 residues: DDB1- and CUL4-associated factor 11 (546 aa).

Residues M1–G10 show a composition bias toward polar residues. The disordered stretch occupies residues M1 to V40. Residues S73 and S75 each carry the phosphoserine modification. Positions H79–D100 are disordered. The span at D80–D89 shows a compositional bias: basic and acidic residues. 7 WD repeats span residues T170–K210, D216–D258, E263–Q302, S305–P345, G353–G392, G435–T480, and T481–D520. The interval D521–Q546 is disordered. Residues H537 to Q546 are compositionally biased toward polar residues.

In terms of assembly, interacts with DDB1 and CUL4A.

The protein operates within protein modification; protein ubiquitination. Functionally, may function as a substrate receptor for CUL4-DDB1 E3 ubiquitin-protein ligase complex. This chain is DDB1- and CUL4-associated factor 11 (DCAF11), found in Bos taurus (Bovine).